Here is a 495-residue protein sequence, read N- to C-terminus: Glutamate--tRNA ligase (495 aa).

Residues 12–22 (PSPTGHLHIGN) carry the 'HIGH' region motif. The short motif at 259-263 (KLSKR) is the 'KMSKS' region element. ATP is bound at residue Lys-262.

This sequence belongs to the class-I aminoacyl-tRNA synthetase family. Glutamate--tRNA ligase type 1 subfamily. Monomer.

It localises to the cytoplasm. It carries out the reaction tRNA(Glu) + L-glutamate + ATP = L-glutamyl-tRNA(Glu) + AMP + diphosphate. In terms of biological role, catalyzes the attachment of glutamate to tRNA(Glu) in a two-step reaction: glutamate is first activated by ATP to form Glu-AMP and then transferred to the acceptor end of tRNA(Glu). This Pediococcus pentosaceus (strain ATCC 25745 / CCUG 21536 / LMG 10740 / 183-1w) protein is Glutamate--tRNA ligase.